A 725-amino-acid chain; its full sequence is MTMFNKIVKEFQWGQHTVRMETGEIARQASGAVIVDVEDTVVLATVVAAKSPKAGQDFFPLTVDYIEKTYAAGKIPGGFFKREGRPSENETLTSRLIDRPLRPLFPEGFYNDVQVVIHVLSINPEIPADIPALIASSAALAVSGIPFNGPVGAARVGYKDGQYLLNPTRAQIAASDLDLVVAGTERAVLMVESEAHQLSEDVMLGAVVYGHEQMQIAINAIHDLVREGGKPEWDWAPAPKNEALIAKVSEIGLPLLQQAYQLRQKSARSTKLKEIYATVQAQLAEAGVEADKVEVGNVLFDLEAKIVRGQILAGEPRIDGRDTRTVRPIEIRSSVLPRAHGSALFTRGETQALVVATLGTKSDEQIIDALAGEYRDRFMLHYNMPPFATGETGRVGSPKRREIGHGRLAKRALIPVLPKDDEFAYTIRLVSEITESNGSSSMASVCGGCLALMDAGVPVKAHVAGVAMGLILEGNKFAVLTDILGDEDHLGDMDFKVAGTDAGITALQMDIKVQGITKEIMQVALAQAREGRMHILGAMQGAMGHARTELSAHAPRMITMKIHPDKIREVIGKGGSTIQALTKETGTTIDIQEDGTITIASTSTDGMAEAKRRIEGITAEAEVGKIYAGTVLKLLDFGAIVNILPGKDGLLHISEIVNERVKDIKDWLKEGQQVRVKLIQADEKGRLRLSLKAALAEEGGSISPIAQGDAPAAAPAAPASPDQQQ.

D488 and D494 together coordinate Mg(2+). The KH domain maps to 555-614 (PRMITMKIHPDKIREVIGKGGSTIQALTKETGTTIDIQEDGTITIASTSTDGMAEAKRRI). In terms of domain architecture, S1 motif spans 624-692 (GKIYAGTVLK…EKGRLRLSLK (69 aa)). Residues 702–725 (ISPIAQGDAPAAAPAAPASPDQQQ) form a disordered region. Low complexity predominate over residues 706–725 (AQGDAPAAAPAAPASPDQQQ).

This sequence belongs to the polyribonucleotide nucleotidyltransferase family. The cofactor is Mg(2+).

The protein resides in the cytoplasm. It carries out the reaction RNA(n+1) + phosphate = RNA(n) + a ribonucleoside 5'-diphosphate. Its function is as follows. Involved in mRNA degradation. Catalyzes the phosphorolysis of single-stranded polyribonucleotides processively in the 3'- to 5'-direction. This chain is Polyribonucleotide nucleotidyltransferase, found in Cupriavidus metallidurans (strain ATCC 43123 / DSM 2839 / NBRC 102507 / CH34) (Ralstonia metallidurans).